Reading from the N-terminus, the 1126-residue chain is MGENGDDKHGRSGQLFENFIQATTCKGTLQAFNILTRQLELDPQDHRHFYAKLKSKVTSWKAKALWNKLDKKHGQKEYKKGKACIGTKCLIIGGGPCGLRTAIELSCLGAKVVVVEKRDTFSRNNVLHLWPYTIHDLRCLGAKKFYGKFCAGAIDHISIWQLQLMLFKIALLHGIEIHVNVEFMKLLEPLEDQENQNIIALFCTESESPDNSECKTRLSAPVVFRCIVGIGGDHSFPNTLAFAFIYIYMNRNKEAVGPSPVWALAGRPRPLHTALLQPGRQQNRIDLENIVYYKDSTHYFVMTAKKQSLLDKGVIINDYADAEMLLCAENVDQDNLQSYAREAADFATNYQLPSLDFAINHYGQPDVAMFDFTSMYASENAALVRERHGHQLLVALVGDSLLEPFWPMGTGCARGFLAAFDTAWMVRSWAQGALPLELLAERISLLIFLNHRLTWQFLNPKKGLQTCHPNVWIPSHALRLSHHVKHLFITNELQTCSLERASSIRRSVGVSRHESDVRPNKLLIWCQKQTEGYGNVTVTNLTSSWKSGLALCALIHRFRPELVDFGSLKEDDVVGNNQLAFDIAEREFGISPMTTGKEMAATEEPDKLSMVLYLSKFYELFRGAPLRPVDTASKDNGDARSAKPSNLIVNNYLNLTLPRKRVPKDEKTSDDSDLNKRRKTVFRCFEEPANVPSRNVNSGNECNDTKEVINQNKVKSMATQLLAKFEENAPNTSLRRQESLTLSEADQAVTAPLTDPPPVNPRFAKPQEPTPSPPQAETKRQFQAVSRTQPVVRPPVQPRPGPAKPTRELRVVERAQSHPDDLGRSESLSSACPSALVLSNILERLQDLEEKAQQKRAQNLANRDFHKKNIKEKAAHLASLFGSVDLPKNKLPSLGFSHHSPQIPYSSSRTPDPPPPSSSSDSSPSSAPSRKSGMSWKGSTFFSKHSLNVWILMTVGKVSSGIGAVAEVLVNLYMCDHKPKPKSSHLGSLRKEFPANIGGSDTCYFCKRRVYVVERLSAEGHFFHRECFKCAFCSTSIRLGNYVFNVEDGNFYCQPHFMHSVTKNKHRKRRTESKAQLEEDKTWRSGEAEAAEVATDSAYSACSSSGDSSPVPLVPFNIPVLDPLIG.

The monooxygenase domain stretch occupies residues 2-494 (GENGDDKHGR…KHLFITNELQ (493 aa)). FAD-binding positions include Cys97, 116–118 (EKR), 123–125 (RNN), Phe183, Tyr299, and Asp399. Residues 516–619 (DVRPNKLLIW…MVLYLSKFYE (104 aa)) enclose the Calponin-homology (CH) domain. The short motif at 659–680 (RKRVPKDEKTSDDSDLNKRRKT) is the Nuclear localization signal element. Disordered stretches follow at residues 748–830 (AVTA…SLSS) and 892–935 (PSLG…SGMS). Residues 792 to 803 (VRPPVQPRPGPA) show a composition bias toward pro residues. The segment covering 805-824 (PTRELRVVERAQSHPDDLGR) has biased composition (basic and acidic residues). Positions 918–932 (SSSDSSPSSAPSRKS) are enriched in low complexity. Positions 1001 to 1063 (DTCYFCKRRV…QPHFMHSVTK (63 aa)) constitute an LIM zinc-binding domain. Zn(2+) contacts are provided by Cys1003, Cys1006, His1024, Cys1027, Cys1030, Cys1033, Cys1053, and His1056.

This sequence belongs to the Mical family. It depends on FAD as a cofactor.

It localises to the nucleus. The protein resides in the cytoplasm. The catalysed reaction is L-methionyl-[F-actin] + NADPH + O2 + H(+) = L-methionyl-(R)-S-oxide-[F-actin] + NADP(+) + H2O. Functionally, nuclear monooxygenase that promotes depolymerization of F-actin by mediating oxidation of specific methionine residues on actin and regulates the srf signaling. Acts by modifying nuclear actin subunits through the addition of oxygen to form methionine-sulfoxide, leading to promote actin filament severing and prevent repolymerization. Acts as a key regulator of the srf signaling pathway elicited by nerve growth factor and serum: mediates oxidation and subsequent depolymerization of nuclear actin, leading to increase mkl1/mrtf-a presence in the nucleus and promote srf:mkl1/mrtf-a-dependent gene transcription. This is [F-actin]-monooxygenase mical2 from Xenopus tropicalis (Western clawed frog).